We begin with the raw amino-acid sequence, 222 residues long: Probable nicotinate-nucleotide adenylyltransferase (222 aa).

Belongs to the NadD family.

The catalysed reaction is nicotinate beta-D-ribonucleotide + ATP + H(+) = deamido-NAD(+) + diphosphate. It participates in cofactor biosynthesis; NAD(+) biosynthesis; deamido-NAD(+) from nicotinate D-ribonucleotide: step 1/1. In terms of biological role, catalyzes the reversible adenylation of nicotinate mononucleotide (NaMN) to nicotinic acid adenine dinucleotide (NaAD). This chain is Probable nicotinate-nucleotide adenylyltransferase, found in Pseudomonas syringae pv. tomato (strain ATCC BAA-871 / DC3000).